Here is a 913-residue protein sequence, read N- to C-terminus: Bifunctional uridylyltransferase/uridylyl-removing enzyme (913 aa).

Residues 1 to 358 (MFNCDVTAID…PDEERPKKQP (358 aa)) are uridylyltransferase. The segment at 359–729 (INARFNQVGD…EHRELALDAV (371 aa)) is uridylyl-removing. The 117-residue stretch at 476 to 592 (VDAHTLFLIR…TLFADLVGNV (117 aa)) folds into the HD domain. ACT domains follow at residues 730–815 (QVFV…RIPR) and 838–913 (IMSL…NDRV).

Belongs to the GlnD family. It depends on Mg(2+) as a cofactor.

It carries out the reaction [protein-PII]-L-tyrosine + UTP = [protein-PII]-uridylyl-L-tyrosine + diphosphate. It catalyses the reaction [protein-PII]-uridylyl-L-tyrosine + H2O = [protein-PII]-L-tyrosine + UMP + H(+). Uridylyltransferase (UTase) activity is inhibited by glutamine, while glutamine activates uridylyl-removing (UR) activity. Modifies, by uridylylation and deuridylylation, the PII regulatory proteins (GlnB and homologs), in response to the nitrogen status of the cell that GlnD senses through the glutamine level. Under low glutamine levels, catalyzes the conversion of the PII proteins and UTP to PII-UMP and PPi, while under higher glutamine levels, GlnD hydrolyzes PII-UMP to PII and UMP (deuridylylation). Thus, controls uridylylation state and activity of the PII proteins, and plays an important role in the regulation of nitrogen assimilation and metabolism. The polypeptide is Bifunctional uridylyltransferase/uridylyl-removing enzyme (Psychrobacter cryohalolentis (strain ATCC BAA-1226 / DSM 17306 / VKM B-2378 / K5)).